A 370-amino-acid polypeptide reads, in one-letter code: Flagellar P-ring protein (370 aa).

The first 21 residues, 1–21, serve as a signal peptide directing secretion; sequence MRLFSVVLAVFTLLLPSQAFA.

Belongs to the FlgI family. The basal body constitutes a major portion of the flagellar organelle and consists of four rings (L,P,S, and M) mounted on a central rod.

It localises to the periplasm. The protein resides in the bacterial flagellum basal body. Assembles around the rod to form the L-ring and probably protects the motor/basal body from shearing forces during rotation. The chain is Flagellar P-ring protein from Alteromonas mediterranea (strain DSM 17117 / CIP 110805 / LMG 28347 / Deep ecotype).